We begin with the raw amino-acid sequence, 599 residues long: Nucleosomal histone kinase 1 (599 aa).

The region spanning 47 to 328 (WRIGPSIGVG…PDYDKCRSWF (282 aa)) is the Protein kinase domain. ATP-binding positions include 53–61 (IGVGGFGEI) and Lys-77. The active-site Proton acceptor is Asp-183. Disordered stretches follow at residues 340-507 (NGDL…PQPR) and 532-599 (RKKK…KYQG). Positions 349–361 (PQTSSNNNLSPPG) are enriched in polar residues. Residues Ser-376, Ser-381, Ser-382, Ser-388, and Ser-390 each carry the phosphoserine modification. The span at 435-448 (VKTEPKSTPRERAT) shows a compositional bias: basic and acidic residues. Residue Ser-483 is modified to Phosphoserine. Positions 546-558 (SRTPSSRSALASS) are enriched in low complexity. A phosphoserine mark is found at Ser-564 and Ser-586. Thr-589 carries the phosphothreonine modification.

Belongs to the protein kinase superfamily. CK1 Ser/Thr protein kinase family. VRK subfamily. As to quaternary structure, may interact with Unc-89 (via protein kinase domain 1). Interacts with L(2)gl. It depends on Mg(2+) as a cofactor. Post-translationally, phosphorylated during mitosis and female meiosis. Expressed in ovaries (at protein level). Expressed in indirect flight muscle (IFM) (at protein level).

Its subcellular location is the cytoplasm. It localises to the nucleus. It is found in the chromosome. The protein resides in the myofibril. The protein localises to the sarcomere. Its subcellular location is the z line. It localises to the m line. It catalyses the reaction L-seryl-[protein] + ATP = O-phospho-L-seryl-[protein] + ADP + H(+). The enzyme catalyses L-threonyl-[protein] + ATP = O-phospho-L-threonyl-[protein] + ADP + H(+). Functionally, serine/threonine-protein kinase involved in somatic mitosis and female meiosis. Required for spindle organization in mitosis, and for the establishment or maintenance of meiosis-specific chromosomal configurations, including the prophase I karyosome and the metaphase I spindle. Specifically phosphorylates nucleosomal H2A on 'Thr-119'. Required for the development and organization of indirect flight muscle sarcomeres by regulating the formation of M line and H zone and the correct assembly of thick and thin filaments in the sarcomere. In Drosophila melanogaster (Fruit fly), this protein is Nucleosomal histone kinase 1 (ball).